Reading from the N-terminus, the 123-residue chain is Hydrogenase maturation factor HypA (123 aa).

A Ni(2+)-binding site is contributed by His2. Positions 77, 80, 96, and 99 each coordinate Zn(2+).

This sequence belongs to the HypA/HybF family.

Involved in the maturation of [NiFe] hydrogenases. Required for nickel insertion into the metal center of the hydrogenase. The chain is Hydrogenase maturation factor HypA from Methanococcus aeolicus (strain ATCC BAA-1280 / DSM 17508 / OCM 812 / Nankai-3).